We begin with the raw amino-acid sequence, 222 residues long: Kinetochore protein Spc25 (222 aa).

Residues 51–86 adopt a coiled-coil conformation; sequence RHQRKVGKLQKVLMERREELDKRVSFIEELDRELEA.

The protein belongs to the SPC25 family. As to quaternary structure, component of the Ndc80 complex, which is composed of Ndc80, Nuf2 and Spc25.

The protein localises to the nucleus. It is found in the chromosome. Its subcellular location is the centromere. The protein resides in the kinetochore. Acts as a component of the essential kinetochore-associated Ndc80 complex, which is required for chromosome segregation and spindle checkpoint activity during meiosis and mitosis. Required for kinetochore integrity and the organization of stable microtubule binding sites in the outer plate of the kinetochore. Participates in SAC signaling that responds specifically to disruptions in spindle microtubule dynamics. The NDC80 complex synergistically enhances the affinity of the SKA1 complex for microtubules and may allow the NDC80 complex to track depolymerizing microtubules. The protein is Kinetochore protein Spc25 of Drosophila simulans (Fruit fly).